The chain runs to 93 residues: Cobalt transport protein CbiN (93 aa).

2 consecutive transmembrane segments (helical) span residues 5–25 (LILL…NHGG) and 63–83 (LLFT…LGYA).

It belongs to the CbiN family. As to quaternary structure, forms an energy-coupling factor (ECF) transporter complex composed of an ATP-binding protein (A component, CbiO), a transmembrane protein (T component, CbiQ) and 2 possible substrate-capture proteins (S components, CbiM and CbiN) of unknown stoichimetry.

It localises to the cell inner membrane. Its pathway is cofactor biosynthesis; adenosylcobalamin biosynthesis. Functionally, part of the energy-coupling factor (ECF) transporter complex CbiMNOQ involved in cobalt import. The protein is Cobalt transport protein CbiN of Klebsiella pneumoniae (strain 342).